We begin with the raw amino-acid sequence, 284 residues long: Bifunctional protein FolD (284 aa).

NADP(+) is bound by residues 164–166 (GRS) and Ser189.

Belongs to the tetrahydrofolate dehydrogenase/cyclohydrolase family. In terms of assembly, homodimer.

The catalysed reaction is (6R)-5,10-methylene-5,6,7,8-tetrahydrofolate + NADP(+) = (6R)-5,10-methenyltetrahydrofolate + NADPH. The enzyme catalyses (6R)-5,10-methenyltetrahydrofolate + H2O = (6R)-10-formyltetrahydrofolate + H(+). It participates in one-carbon metabolism; tetrahydrofolate interconversion. Its function is as follows. Catalyzes the oxidation of 5,10-methylenetetrahydrofolate to 5,10-methenyltetrahydrofolate and then the hydrolysis of 5,10-methenyltetrahydrofolate to 10-formyltetrahydrofolate. The chain is Bifunctional protein FolD from Listeria monocytogenes serotype 4a (strain HCC23).